The following is a 341-amino-acid chain: L-threonine 3-dehydrogenase (341 aa).

A Zn(2+)-binding site is contributed by C38. Catalysis depends on charge relay system residues T40 and H43. Residues H63, E64, C93, C96, C99, and C107 each coordinate Zn(2+). NAD(+) is bound by residues I175, D195, R200, 262–264, and 286–287; these read LGI and IY.

It belongs to the zinc-containing alcohol dehydrogenase family. In terms of assembly, homotetramer. Zn(2+) serves as cofactor.

It is found in the cytoplasm. The enzyme catalyses L-threonine + NAD(+) = (2S)-2-amino-3-oxobutanoate + NADH + H(+). Its pathway is amino-acid degradation; L-threonine degradation via oxydo-reductase pathway; glycine from L-threonine: step 1/2. Its function is as follows. Catalyzes the NAD(+)-dependent oxidation of L-threonine to 2-amino-3-ketobutyrate. In Escherichia coli O17:K52:H18 (strain UMN026 / ExPEC), this protein is L-threonine 3-dehydrogenase.